The following is a 383-amino-acid chain: NADH-quinone oxidoreductase subunit D 1 (383 aa).

It belongs to the complex I 49 kDa subunit family. NDH-1 is composed of 14 different subunits. Subunits NuoB, C, D, E, F, and G constitute the peripheral sector of the complex.

Its subcellular location is the cell membrane. The enzyme catalyses a quinone + NADH + 5 H(+)(in) = a quinol + NAD(+) + 4 H(+)(out). Functionally, NDH-1 shuttles electrons from NADH, via FMN and iron-sulfur (Fe-S) centers, to quinones in the respiratory chain. The immediate electron acceptor for the enzyme in this species is believed to be a menaquinone. Couples the redox reaction to proton translocation (for every two electrons transferred, four hydrogen ions are translocated across the cytoplasmic membrane), and thus conserves the redox energy in a proton gradient. This Streptomyces coelicolor (strain ATCC BAA-471 / A3(2) / M145) protein is NADH-quinone oxidoreductase subunit D 1.